The primary structure comprises 289 residues: Phospholipase A1 (289 aa).

The N-terminal stretch at 1–20 (MRTLQGWLLPVFMLPMAVYA) is a signal peptide. At 21–52 (QEATVKEVHDAPAVRGSIIANMLQEHDNPFTL) the chain is on the periplasmic side. Residues 53–65 (YPYDTNYLIYTQT) traverse the membrane as a beta stranded segment. Residues 66-84 (SDLNKEAIASYDWAENARK) lie on the Extracellular side of the membrane. Residues 85–99 (DEVKFQLSLAFPLWR) traverse the membrane as a beta stranded segment. The Periplasmic portion of the chain corresponds to 100 to 105 (GILGPN). The beta stranded transmembrane segment at 106–118 (SVLGASYTQKSWW) threads the bilayer. Residues 119–128 (QLSNSEESSP) are Extracellular-facing. Position 126 (Ser-126) interacts with Ca(2+). Residues 129-148 (FRETNYEPQLFLGFATDYRF) traverse the membrane as a beta stranded segment. The Periplasmic portion of the chain corresponds to 149–150 (AG). A beta stranded membrane pass occupies residues 151–164 (WTLRDVEMGYNHDS). The active-site Proton acceptor is the His-162. Catalysis depends on Ser-164, which acts as the Nucleophile. At 165-173 (NGRSDPTSR) the chain is on the extracellular side. Ca(2+) contacts are provided by Arg-167 and Ser-172. The chain crosses the membrane as a beta stranded span at residues 174–186 (SWNRLYTRLMAEN). The Periplasmic segment spans residues 187 to 188 (GN). The beta stranded transmembrane segment at 189–198 (WLVEVKPWYV) threads the bilayer. Residues 199-216 (VGNTDDNPDITKYMGYYQ) lie on the Extracellular side of the membrane. Asp-204 contributes to the Ca(2+) binding site. Residues 217 to 223 (LKIGYHL) form a beta stranded membrane-spanning segment. Topologically, residues 224–225 (GD) are periplasmic. Residues 226 to 234 (AVLSAKGQY) form a beta stranded membrane-spanning segment. At 235-241 (NWNTGYG) the chain is on the extracellular side. Residues 242–250 (GAELGLSYP) form a beta stranded membrane-spanning segment. The Periplasmic segment spans residues 251 to 255 (ITKHV). Residues 256–265 (RLYTQVYSGY) traverse the membrane as a beta stranded segment. Topologically, residues 266-274 (GESLIDYNF) are extracellular. The beta stranded transmembrane segment at 275–286 (NQTRVGVGVMLN) threads the bilayer. Residues 287 to 289 (DLF) are Periplasmic-facing.

Belongs to the phospholipase A1 family. As to quaternary structure, homodimer; dimerization is reversible, and the dimeric form is the active one. Requires Ca(2+) as cofactor.

The protein resides in the cell outer membrane. It catalyses the reaction a 1,2-diacyl-sn-glycero-3-phosphocholine + H2O = a 2-acyl-sn-glycero-3-phosphocholine + a fatty acid + H(+). The catalysed reaction is a 1,2-diacyl-sn-glycero-3-phosphocholine + H2O = a 1-acyl-sn-glycero-3-phosphocholine + a fatty acid + H(+). Hydrolysis of phosphatidylcholine with phospholipase A2 (EC 3.1.1.4) and phospholipase A1 (EC 3.1.1.32) activities. This is Phospholipase A1 (pldA) from Escherichia coli O157:H7.